A 331-amino-acid chain; its full sequence is N-arachidonyl glycine receptor (331 aa).

Residues 1-26 (MAIPSNRDQLALSNGSHPEEYKIAAL) are Extracellular-facing. N-linked (GlcNAc...) asparagine glycosylation is present at asparagine 14. The chain crosses the membrane as a helical span at residues 27-47 (VFYSCIFLIGLLVNVTALWVF). Over 48–56 (SCTTKKRTT) the chain is Cytoplasmic. Residues 57–77 (VTIYMMNVALLDLVFILSLPF) traverse the membrane as a helical segment. Topologically, residues 78-95 (RMFYYAKGEWPFGDYFCH) are extracellular. The cysteines at positions 94 and 172 are disulfide-linked. A helical membrane pass occupies residues 96-116 (ILGALVVFYPSLALWLLALIS). Topologically, residues 117–138 (ADRYMAIVQPKYAKELKNTGKA) are cytoplasmic. Residues 139–159 (VLACVGVWIMTLTTTVPLLLL) form a helical membrane-spanning segment. Topologically, residues 160–191 (DEDPDKASSPATCLKISDIIHLKAVNVLNFTR) are extracellular. The N-linked (GlcNAc...) asparagine glycan is linked to asparagine 188. The chain crosses the membrane as a helical span at residues 192–212 (LIFFFLIPLFIMIGCYVVIIH). The Cytoplasmic portion of the chain corresponds to 213–236 (SLLRGQTSKLKPKVKEKSIRIIVT). Residues 237 to 257 (LLLQVLACFVPFHICFALLML) traverse the membrane as a helical segment. Topologically, residues 258-268 (QGEENSYSPWG) are extracellular. Residues 269–289 (AFTTFLMNLSTCLDVVLYYIV) traverse the membrane as a helical segment. The Cytoplasmic portion of the chain corresponds to 290-331 (SKQFQARVISVMLYRNYLRSVRRKSVRSGSLRSLSNMNSEML). At serine 322 the chain carries Phosphoserine.

It belongs to the G-protein coupled receptor 1 family. In terms of tissue distribution, expressed in testis, spleen and brain (at protein level).

It is found in the cell membrane. The protein resides in the cytoplasmic vesicle membrane. G protein-coupled receptor (GPCR) that plays a role in diverse physiological processes particularly within the immune and nervous systems. Becomes active when triggered by various endogenous ligands including endocannabinoid N-arachidonyl glycine (NAGly), delta-9-tetrahydrocannabinol or resolvin D2/RvD2 derived from the omega-3 fatty acid docosahexaenoic acid (DHA). Upon RvD2 binding, facilitates the resolution of inflammation, aiding in tissue repair and homeostasis. Mechanistically, RvD2 ligation initiates Galphas protein coupling, activation of cAMP-PKA signaling pathway and phosphorylation of STAT3, leading to RvD2-stimulated macrophage phagocytosis. Mediates NAGly-induced process of reorganization of actin filaments and induction of acrosomal exocytosis. Activation by N-arachidonoyl glycine (NAGly) can also induce apoptosis in macrophages. Plays a role in homeostasis of CD8+ subsets of intraepithelial lymphocytes (IELs) (CD8alphaalpha and CD8alphabeta IELs) in small intestine by supporting preferential migration of CD8alphaalpha T-cells to intraepithelial compartment over lamina propria compartment, and by mediating their reconstitution into small intestine after bone marrow transplant. Participates also in hypotensive responses, mediating reduction in intraocular and blood pressure. The polypeptide is N-arachidonyl glycine receptor (Rattus norvegicus (Rat)).